A 183-amino-acid polypeptide reads, in one-letter code: Small ribosomal subunit protein eS10z (183 aa).

The interval 91–183 (LKKSARPPGR…GAGPTSSSME (93 aa)) is disordered. Residues 109-130 (DRPRGPPRFEGDRPRFGDRDGY) show a composition bias toward basic and acidic residues. 2 stretches are compositionally biased toward gly residues: residues 131–146 (RGGP…GEKG) and 161–175 (GRPG…GFGA).

Belongs to the eukaryotic ribosomal protein eS10 family.

Its subcellular location is the cytoplasm. The polypeptide is Small ribosomal subunit protein eS10z (Oryza sativa subsp. japonica (Rice)).